The chain runs to 978 residues: Translation initiation factor IF-2 (978 aa).

Disordered stretches follow at residues 107 to 129 and 146 to 387; these read AEAP…NLEL and QEEE…HRVQ. The segment covering 146–169 has biased composition (basic and acidic residues); the sequence is QEEELSERRRQREEQEARSREASE. Over residues 170–186 the composition is skewed to low complexity; the sequence is KAAAVAAEAAEAAAAQA. Basic and acidic residues predominate over residues 215–259; that stretch reads AEKEQHLAKEKGLAREKELAESKARAAEDVVRAADLGDRRRKAES. Composition is skewed to low complexity over residues 295 to 326 and 349 to 361; these read KPAA…AGAG and PTRG…GAGR. Residues 375–386 are compositionally biased toward basic and acidic residues; the sequence is GSSDRDRDDHRV. The region spanning 478–647 is the tr-type G domain; sequence PRAPVVTVMG…LLQAEVLELK (170 aa). The interval 487 to 494 is G1; it reads GHVDHGKT. 487 to 494 serves as a coordination point for GTP; sequence GHVDHGKT. The interval 512 to 516 is G2; it reads GITQH. The interval 533 to 536 is G3; sequence DTPG. Residues 533-537 and 587-590 contribute to the GTP site; these read DTPGH and NKID. Positions 587 to 590 are G4; sequence NKID. Positions 623–625 are G5; the sequence is SAK.

This sequence belongs to the TRAFAC class translation factor GTPase superfamily. Classic translation factor GTPase family. IF-2 subfamily.

The protein resides in the cytoplasm. One of the essential components for the initiation of protein synthesis. Protects formylmethionyl-tRNA from spontaneous hydrolysis and promotes its binding to the 30S ribosomal subunits. Also involved in the hydrolysis of GTP during the formation of the 70S ribosomal complex. The polypeptide is Translation initiation factor IF-2 (Albidiferax ferrireducens (strain ATCC BAA-621 / DSM 15236 / T118) (Rhodoferax ferrireducens)).